Consider the following 377-residue polypeptide: Phosphoserine aminotransferase (377 aa).

Arginine 43 lines the L-glutamate pocket. Pyridoxal 5'-phosphate-binding residues include tryptophan 105, threonine 164, aspartate 189, and glutamine 212. Lysine 213 bears the N6-(pyridoxal phosphate)lysine mark. Residue 254–255 (NT) participates in pyridoxal 5'-phosphate binding.

This sequence belongs to the class-V pyridoxal-phosphate-dependent aminotransferase family. SerC subfamily. As to quaternary structure, homodimer. Requires pyridoxal 5'-phosphate as cofactor.

It localises to the cytoplasm. The catalysed reaction is O-phospho-L-serine + 2-oxoglutarate = 3-phosphooxypyruvate + L-glutamate. It catalyses the reaction 4-(phosphooxy)-L-threonine + 2-oxoglutarate = (R)-3-hydroxy-2-oxo-4-phosphooxybutanoate + L-glutamate. It participates in amino-acid biosynthesis; L-serine biosynthesis; L-serine from 3-phospho-D-glycerate: step 2/3. It functions in the pathway cofactor biosynthesis; pyridoxine 5'-phosphate biosynthesis; pyridoxine 5'-phosphate from D-erythrose 4-phosphate: step 3/5. Functionally, catalyzes the reversible conversion of 3-phosphohydroxypyruvate to phosphoserine and of 3-hydroxy-2-oxo-4-phosphonooxybutanoate to phosphohydroxythreonine. In Bordetella pertussis (strain Tohama I / ATCC BAA-589 / NCTC 13251), this protein is Phosphoserine aminotransferase.